Here is a 428-residue protein sequence, read N- to C-terminus: Serine--tRNA ligase (428 aa).

An L-serine-binding site is contributed by 235 to 237; that stretch reads TAE. Residue 266–268 participates in ATP binding; sequence RSE. Residue Glu289 participates in L-serine binding. Position 353–356 (353–356) interacts with ATP; the sequence is EISS. An L-serine-binding site is contributed by Ser389.

The protein belongs to the class-II aminoacyl-tRNA synthetase family. Type-1 seryl-tRNA synthetase subfamily. Homodimer. The tRNA molecule binds across the dimer.

The protein localises to the cytoplasm. The catalysed reaction is tRNA(Ser) + L-serine + ATP = L-seryl-tRNA(Ser) + AMP + diphosphate + H(+). It carries out the reaction tRNA(Sec) + L-serine + ATP = L-seryl-tRNA(Sec) + AMP + diphosphate + H(+). The protein operates within aminoacyl-tRNA biosynthesis; selenocysteinyl-tRNA(Sec) biosynthesis; L-seryl-tRNA(Sec) from L-serine and tRNA(Sec): step 1/1. Its function is as follows. Catalyzes the attachment of serine to tRNA(Ser). Is also able to aminoacylate tRNA(Sec) with serine, to form the misacylated tRNA L-seryl-tRNA(Sec), which will be further converted into selenocysteinyl-tRNA(Sec). This chain is Serine--tRNA ligase, found in Shewanella loihica (strain ATCC BAA-1088 / PV-4).